The following is a 496-amino-acid chain: MQRDCTMDYKESCPSVSIPSSDEHREKKKRFTVYKVLVSVGRSEWFVFRRYAEFDKLYNSLKKQFPAMALKIPAKRIFGDNFDPDFIKQRRAGLNEFIQNLVRYPELYNHPDVRAFLQMDSPRHQSDPSEDEDERSTPKPHSTSRNINLGPTGNPHAKPSDFDFLKVIGKGSFGKVLLAKRKLDGKFYAVKVLQKKIVLNRKEQKHIMAERNVLLKNVKHPFLVGLHYSFQTTEKLYFVLDFVNGGELFFHLQRERSFPEPRARFYAAEIASALGYLHSIKIVYRDLKPENILLDSMGHVVLTDFGLCKEGIAISDTTTTFCGTPEYLAPEVIRKQPYDRTVDWWCLGAVLYEMLYGLPPFYCRDVAEMYDNILHKPLNLRPGVSLTAWSILEELLEKNRQNRLGAKEDFLEIQNHPFFESLSWTDLVQKKIPPPFNPNVAGPDDIRNFDAVFTEETVPYSVCVSSDYSIVNASVLEADDAFVGFSYAPPSEDLFL.

Positions 12–124 (SCPSVSIPSS…AFLQMDSPRH (113 aa)) constitute a PX domain. Positions 121–157 (SPRHQSDPSEDEDERSTPKPHSTSRNINLGPTGNPHA) are disordered. Ser-126 and Ser-129 each carry phosphoserine. The span at 139 to 151 (KPHSTSRNINLGP) shows a compositional bias: polar residues. Positions 162 to 464 (FDFLKVIGKG…EETVPYSVCV (303 aa)) constitute a Protein kinase domain. Residues 168–176 (IGKGSFGKV) and Lys-191 contribute to the ATP site. Positions 195 to 205 (KKIVLNRKEQK) match the Nuclear localization signal motif. The Proton acceptor role is filled by Asp-286. Phosphothreonine; by PDPK1 is present on Thr-320. One can recognise an AGC-kinase C-terminal domain in the interval 420-496 (ESLSWTDLVQ…YAPPSEDLFL (77 aa)). Ser-486 is modified (phosphoserine).

It belongs to the protein kinase superfamily. AGC Ser/Thr protein kinase family. Interacts with GSK3B and FLII. Interacts with PDPK1 in a phosphorylation-dependent manner. Activated by phosphorylation on Ser-486 by an unknown kinase (may be mTORC2 but not confirmed), transforming it into a substrate for PDPK1 which then phosphorylates it on Thr-320.

It is found in the cytoplasmic vesicle. It localises to the early endosome. The protein localises to the recycling endosome. The enzyme catalyses L-seryl-[protein] + ATP = O-phospho-L-seryl-[protein] + ADP + H(+). It catalyses the reaction L-threonyl-[protein] + ATP = O-phospho-L-threonyl-[protein] + ADP + H(+). Two specific sites, one in the kinase domain (Thr-320) and the other in the C-terminal regulatory region (Ser-486), need to be phosphorylated for its full activation. In terms of biological role, serine/threonine-protein kinase which is involved in the regulation of a wide variety of ion channels, membrane transporters, cell growth, proliferation, survival and migration. Up-regulates Na(+) channels: SCNN1A/ENAC and SCN5A, K(+) channels: KCNA3/KV1.3, KCNE1, KCNQ1 and KCNH2/HERG, epithelial Ca(2+) channels: TRPV5 and TRPV6, chloride channel: BSND, creatine transporter: SLC6A8, Na(+)/dicarboxylate cotransporter: SLC13A2/NADC1, Na(+)-dependent phosphate cotransporter: SLC34A2/NAPI-2B, amino acid transporters: SLC1A5/ASCT2 and SLC6A19, glutamate transporters: SLC1A3/EAAT1, SLC1A6/EAAT4 and SLC1A7/EAAT5, glutamate receptors: GRIA1/GLUR1 and GRIK2/GLUR6, Na(+)/H(+) exchanger: SLC9A3/NHE3, and the Na(+)/K(+) ATPase. Plays a role in the regulation of renal tubular phosphate transport and bone density. Phosphorylates NEDD4L and GSK3B. Positively regulates ER transcription activity through phosphorylation of FLII. Negatively regulates the function of ITCH/AIP4 via its phosphorylation and thereby prevents CXCR4 from being efficiently sorted to lysosomes. The chain is Serine/threonine-protein kinase Sgk3 (Sgk3) from Rattus norvegicus (Rat).